Reading from the N-terminus, the 173-residue chain is Large ribosomal subunit protein bL12m (173 aa).

The transit peptide at 1-33 directs the protein to the mitochondrion; sequence MFRIASRQTRNLRALSSSKNWARSLVNTRSFRA.

This sequence belongs to the bacterial ribosomal protein bL12 family. Component of the mitochondrial large ribosomal subunit (mt-LSU). Mature yeast 74S mitochondrial ribosomes consist of a small (37S) and a large (54S) subunit. The 37S small subunit contains a 15S ribosomal RNA (15S mt-rRNA) and at least 32 different proteins. The 54S large subunit contains a 21S rRNA (21S mt-rRNA) and at least 45 different proteins.

It is found in the mitochondrion. Its function is as follows. Component of the mitochondrial ribosome (mitoribosome), a dedicated translation machinery responsible for the synthesis of mitochondrial genome-encoded proteins, including at least some of the essential transmembrane subunits of the mitochondrial respiratory chain. The mitoribosomes are attached to the mitochondrial inner membrane and translation products are cotranslationally integrated into the membrane. The chain is Large ribosomal subunit protein bL12m (mrpl12) from Schizosaccharomyces pombe (strain 972 / ATCC 24843) (Fission yeast).